Consider the following 174-residue polypeptide: Peptide methionine sulfoxide reductase MsrA (174 aa).

Residue cysteine 11 is part of the active site.

This sequence belongs to the MsrA Met sulfoxide reductase family.

It carries out the reaction L-methionyl-[protein] + [thioredoxin]-disulfide + H2O = L-methionyl-(S)-S-oxide-[protein] + [thioredoxin]-dithiol. The catalysed reaction is [thioredoxin]-disulfide + L-methionine + H2O = L-methionine (S)-S-oxide + [thioredoxin]-dithiol. Its function is as follows. Has an important function as a repair enzyme for proteins that have been inactivated by oxidation. Catalyzes the reversible oxidation-reduction of methionine sulfoxide in proteins to methionine. This Haloquadratum walsbyi (strain DSM 16790 / HBSQ001) protein is Peptide methionine sulfoxide reductase MsrA.